The chain runs to 348 residues: Ion-translocating oxidoreductase complex subunit D (348 aa).

Helical transmembrane passes span 20–39 (LMKW…TYFF), 72–91 (ALRD…AIPP), and 120–140 (PFNP…VQMT). At Thr187 the chain carries FMN phosphoryl threonine. 5 helical membrane-spanning segments follow: residues 214 to 234 (LAGV…LVLI), 241 to 261 (WHIP…FLMF), 266 to 286 (TASP…FFIA), 300 to 320 (LVFG…GGFP), and 321 to 341 (DGVA…DYYT).

The protein belongs to the NqrB/RnfD family. As to quaternary structure, the complex is composed of six subunits: RnfA, RnfB, RnfC, RnfD, RnfE and RnfG. The cofactor is FMN.

The protein localises to the cell inner membrane. Its function is as follows. Part of a membrane-bound complex that couples electron transfer with translocation of ions across the membrane. The chain is Ion-translocating oxidoreductase complex subunit D from Vibrio atlanticus (strain LGP32) (Vibrio splendidus (strain Mel32)).